Here is a 254-residue protein sequence, read N- to C-terminus: Major prion protein (254 aa).

The N-terminal stretch at 1-22 is a signal peptide; the sequence is MANLGYWLLALFVATWTDVGLC. The interval 23–231 is interaction with GRB2, ERI3 and SYN1; it reads KKRPKPGGWN…SQAYYDGRRS (209 aa). Positions 25 to 107 are disordered; the sequence is RPKPGGWNTG…QWNKPSKPKT (83 aa). 5 repeat units span residues 51 to 59, 60 to 67, 68 to 75, 76 to 83, and 84 to 91. The interval 51–91 is 5 X 8 AA tandem repeats of P-H-G-G-G-W-G-Q; sequence PQGGGTWGQPHGGGWGQPHGGGWGQPHGGGWGQPHGGGWGQ. Over residues 52 to 95 the composition is skewed to gly residues; the sequence is QGGGTWGQPHGGGWGQPHGGGWGQPHGGGWGQPHGGGWGQGGGT. The Cu(2+) site is built by His-61, Gly-62, Gly-63, His-69, Gly-70, Gly-71, His-77, Gly-78, Gly-79, His-85, Gly-86, and Gly-87. Cysteines 179 and 214 form a disulfide. Residues Asn-181 and Asn-197 are each glycosylated (N-linked (GlcNAc...) asparagine). The GPI-anchor amidated serine moiety is linked to residue Ser-231. The propeptide at 232 to 254 is removed in mature form; the sequence is SAVLFSSPPMILLISFLIFLIVG.

The protein belongs to the prion family. In terms of assembly, monomer and homodimer. Has a tendency to aggregate into amyloid fibrils containing a cross-beta spine, formed by a steric zipper of superposed beta-strands. Soluble oligomers may represent an intermediate stage on the path to fibril formation. Copper binding may promote oligomerization. Interacts with GRB2, APP, ERI3/PRNPIP and SYN1. Mislocalized cytosolically exposed PrP interacts with MGRN1; this interaction alters MGRN1 subcellular location and causes lysosomal enlargement. Interacts with KIAA1191.

The protein localises to the cell membrane. Its subcellular location is the golgi apparatus. Functionally, its primary physiological function is unclear. Has cytoprotective activity against internal or environmental stresses. May play a role in neuronal development and synaptic plasticity. May be required for neuronal myelin sheath maintenance. May play a role in iron uptake and iron homeostasis. Soluble oligomers are toxic to cultured neuroblastoma cells and induce apoptosis (in vitro). Association with GPC1 (via its heparan sulfate chains) targets PRNP to lipid rafts. Also provides Cu(2+) or Zn(2+) for the ascorbate-mediated GPC1 deaminase degradation of its heparan sulfate side chains. The sequence is that of Major prion protein (PRNP) from Sigmodon hispidus (Hispid cotton rat).